A 264-amino-acid chain; its full sequence is Heavy metal-associated isoprenylated plant protein 17 (264 aa).

HMA domains are found at residues 32 to 95 (VTDA…KKIE) and 133 to 204 (IMEV…KERQ). Positions 185–218 (SRKLNKKMHQKIKKAEKERQEWESEMMLREAEEE) form a coiled coil. Cys-261 carries the post-translational modification Cysteine methyl ester. Cys-261 is lipidated: S-farnesyl cysteine. Residues 262 to 264 (SIS) constitute a propeptide, removed in mature form.

It belongs to the HIPP family.

Functionally, probable heavy-metal-binding protein. The chain is Heavy metal-associated isoprenylated plant protein 17 from Arabidopsis thaliana (Mouse-ear cress).